The following is a 347-amino-acid chain: MSDRQAALDMALKQIEKQFGKGSIMKLGEKTDTRISTVPSGSLALDTALGIGGYPRGRIIEVYGPESSGKTTVALHAIAEVQEKGGQAAFIDAEHALDPVYAQKLGVNIEELLLSQPDTGEQALEIAEALVRSGAVDIVVVDSVAALVPKAEIEGDMGDSHVGLQARLMSQALRKLSGAINKSKTIAIFINQIREKVGVMFGNPETTPGGRALKFYSSVRLEVRRAEQLKQGNDVMGNKTRIKVVKNKVAPPFRTAEVDIMYGEGISKEGEIIDLGTELDIVQKSGSWYSYEEERLGQGRENAKQFLKENKDIMLMIQEQIREYYGLDNNGVTDKAEEVQEEMELEE.

64 to 71 (GPESSGKT) lines the ATP pocket.

This sequence belongs to the RecA family.

The protein localises to the cytoplasm. Its function is as follows. Can catalyze the hydrolysis of ATP in the presence of single-stranded DNA, the ATP-dependent uptake of single-stranded DNA by duplex DNA, and the ATP-dependent hybridization of homologous single-stranded DNAs. It interacts with LexA causing its activation and leading to its autocatalytic cleavage. The chain is Protein RecA from Bacillus velezensis (strain DSM 23117 / BGSC 10A6 / LMG 26770 / FZB42) (Bacillus amyloliquefaciens subsp. plantarum).